Here is a 425-residue protein sequence, read N- to C-terminus: Inhibin beta A chain (425 aa).

An N-terminal signal peptide occupies residues methionine 1–serine 20. A propeptide spanning residues serine 21 to arginine 309 is cleaved from the precursor. The N-linked (GlcNAc...) asparagine glycan is linked to asparagine 165. The interval lysine 260–arginine 289 is disordered. Residues lysine 263 to glutamate 275 are compositionally biased toward basic and acidic residues. 4 cysteine pairs are disulfide-bonded: cysteine 313-cysteine 321, cysteine 320-cysteine 390, cysteine 349-cysteine 422, and cysteine 353-cysteine 424.

This sequence belongs to the TGF-beta family. Dimeric, linked by one or more disulfide bonds. Inhibin A is a dimer of alpha/INHA and beta-A/INHBA. Activin A is a homodimer of beta-A/INHBA. Activin AB is a dimer of beta-A/INHBA and beta-B/INHBB. Interacts with FST and FSTL3; these interactions prevent activin A interaction to its type II receptor. Activin A interacts with ACVR2A. Activin A interacts with BMPR2. Inhibin A interacts with ACVR1; this interaction creates a non-signaling complex (NSC) that inhibits ACVR1-mediated BMP signaling. Inhibin A interacts with ACVR2A.

It is found in the secreted. In terms of biological role, inhibins/activins are involved in regulating a number of diverse functions such as hypothalamic and pituitary hormone secretion, gonadal hormone secretion, germ cell development and maturation, erythroid differentiation, insulin secretion, nerve cell survival, embryonic axial development or bone growth, depending on their subunit composition. Functionally, activin A is a homodimer of INHBA that plays a role in several essential biological processes including embryonic development, stem cell maintenance and differentiation, haematopoiesis, cell proliferation and tissue fibrosis. Signals through type I (such as ACVR1B or ACVR1C) and type II receptors (such as ACVR2A, ACVR2B or BMPR2) which, upon ligand binding, phosphorylate SMAD2 and SMAD3 intracellular signaling mediators that form a complex with SMAD4, translocate to the nucleus and modulate gene expression. Can also activate alternative non-canonical intracellular signaling pathways including the p38 MAPK, extracellular signal-regulated kinases 1/2 (ERK1/2) and c-Jun N-terminal kinases (JNKs) to modulate cell migration and differentiation. Alternatively, promotes osteoblastic differentiation via ACVRL1-SMAD1/5/9 pathway. In addition, can engage the type I receptor ACVR1 to form an ACVR1-activin A-type II receptor non-signaling complex (NSC) that renders receptors unavailable for engagement with BMPs, hence resulting in an apparent inhibition of ACVR1-mediated BMP signaling. Its function is as follows. Inhibin A is a dimer of alpha/INHA and beta-A/INHBA that functions as a feedback regulator in the hypothalamic-pituitary-gonadal (HPG) axis. Inhibits the secretion of FSH from the anterior pituitary gland by acting on pituitary gonadotrope cells. Antagonizes activin A by binding to the proteoglycan, betaglycan, and forming a stable complex with and, thereby, sequestering type II activin receptors while excluding type I receptor. The protein is Inhibin beta A chain (INHBA) of Ovis aries (Sheep).